The following is a 503-amino-acid chain: Aspartyl/glutamyl-tRNA(Asn/Gln) amidotransferase subunit B (503 aa).

The protein belongs to the GatB/GatE family. GatB subfamily. Heterotrimer of A, B and C subunits.

It catalyses the reaction L-glutamyl-tRNA(Gln) + L-glutamine + ATP + H2O = L-glutaminyl-tRNA(Gln) + L-glutamate + ADP + phosphate + H(+). The enzyme catalyses L-aspartyl-tRNA(Asn) + L-glutamine + ATP + H2O = L-asparaginyl-tRNA(Asn) + L-glutamate + ADP + phosphate + 2 H(+). Functionally, allows the formation of correctly charged Asn-tRNA(Asn) or Gln-tRNA(Gln) through the transamidation of misacylated Asp-tRNA(Asn) or Glu-tRNA(Gln) in organisms which lack either or both of asparaginyl-tRNA or glutaminyl-tRNA synthetases. The reaction takes place in the presence of glutamine and ATP through an activated phospho-Asp-tRNA(Asn) or phospho-Glu-tRNA(Gln). This Jannaschia sp. (strain CCS1) protein is Aspartyl/glutamyl-tRNA(Asn/Gln) amidotransferase subunit B.